The primary structure comprises 335 residues: Tetraacyldisaccharide 4'-kinase (335 aa).

59–66 (TAGGNGKT) is a binding site for ATP.

It belongs to the LpxK family.

The enzyme catalyses a lipid A disaccharide + ATP = a lipid IVA + ADP + H(+). Its pathway is glycolipid biosynthesis; lipid IV(A) biosynthesis; lipid IV(A) from (3R)-3-hydroxytetradecanoyl-[acyl-carrier-protein] and UDP-N-acetyl-alpha-D-glucosamine: step 6/6. Its function is as follows. Transfers the gamma-phosphate of ATP to the 4'-position of a tetraacyldisaccharide 1-phosphate intermediate (termed DS-1-P) to form tetraacyldisaccharide 1,4'-bis-phosphate (lipid IVA). This Vibrio campbellii (strain ATCC BAA-1116) protein is Tetraacyldisaccharide 4'-kinase.